Reading from the N-terminus, the 607-residue chain is Probable LRR receptor-like serine/threonine-protein kinase At5g65240 (607 aa).

An N-terminal signal peptide occupies residues 1–24; it reads MALLIITALVFSSLWSSVSPDAQG. Topologically, residues 25–219 are extracellular; it reads DALFALRSSL…SGDSSSRKTG (195 aa). Residues Asn74 and Asn110 are each glycosylated (N-linked (GlcNAc...) asparagine). 4 LRR repeats span residues 87–111, 112–135, 137–159, and 160–183; these read LTTL…IGNL, SSLT…LGNL, NLQF…LTGL, and SKLI…LFKI. N-linked (GlcNAc...) asparagine glycans are attached at residues Asn149, Asn171, Asn187, and Asn192. The helical transmembrane segment at 220-240 threads the bilayer; that stretch reads IIAGVVSGIAVILLGFFFFFF. Residues 241–607 are Cytoplasmic-facing; sequence CKDKHKGYKR…QDAIELSGGR (367 aa). Position 281 is a phosphothreonine (Thr281). Residues 284-568 enclose the Protein kinase domain; sequence FSEKNVLGQG…EGEGLAERWE (285 aa). 290–298 is an ATP binding site; it reads LGQGGFGKV. A Phosphothreonine modification is found at Thr307. Lys312 lines the ATP pocket. Position 365 is a phosphoserine (Ser365). Catalysis depends on Asp411, which acts as the Proton acceptor. Phosphothreonine is present on residues Thr444, Thr445, and Thr450. At Ser460 the chain carries Phosphoserine. Thr461 is modified (phosphothreonine). Ser465 is subject to Phosphoserine. Thr541 is subject to Phosphothreonine.

This sequence belongs to the protein kinase superfamily. Ser/Thr protein kinase family.

It is found in the cell membrane. It catalyses the reaction L-seryl-[protein] + ATP = O-phospho-L-seryl-[protein] + ADP + H(+). The enzyme catalyses L-threonyl-[protein] + ATP = O-phospho-L-threonyl-[protein] + ADP + H(+). The chain is Probable LRR receptor-like serine/threonine-protein kinase At5g65240 from Arabidopsis thaliana (Mouse-ear cress).